Here is a 213-residue protein sequence, read N- to C-terminus: Uridine kinase (213 aa).

Residue 15 to 22 (GASASGKS) coordinates ATP.

It belongs to the uridine kinase family.

It is found in the cytoplasm. It carries out the reaction uridine + ATP = UMP + ADP + H(+). It catalyses the reaction cytidine + ATP = CMP + ADP + H(+). Its pathway is pyrimidine metabolism; CTP biosynthesis via salvage pathway; CTP from cytidine: step 1/3. It participates in pyrimidine metabolism; UMP biosynthesis via salvage pathway; UMP from uridine: step 1/1. In Salmonella agona (strain SL483), this protein is Uridine kinase.